Here is a 221-residue protein sequence, read N- to C-terminus: uncharacterized protein (221 aa).

This is an uncharacterized protein from Shigella flexneri.